Here is a 235-residue protein sequence, read N- to C-terminus: Ribosomal RNA small subunit methyltransferase G (235 aa).

S-adenosyl-L-methionine-binding positions include G98, M103, V149–E150, and R164.

The protein belongs to the methyltransferase superfamily. RNA methyltransferase RsmG family.

The protein resides in the cytoplasm. It catalyses the reaction guanosine(527) in 16S rRNA + S-adenosyl-L-methionine = N(7)-methylguanosine(527) in 16S rRNA + S-adenosyl-L-homocysteine. In terms of biological role, specifically methylates the N7 position of guanine in position 527 of 16S rRNA. The sequence is that of Ribosomal RNA small subunit methyltransferase G from Cupriavidus pinatubonensis (strain JMP 134 / LMG 1197) (Cupriavidus necator (strain JMP 134)).